Here is a 209-residue protein sequence, read N- to C-terminus: Na(+)-translocating NADH-quinone reductase subunit D (209 aa).

The next 5 membrane-spanning stretches (helical) occupy residues 42 to 62 (LVMT…ISLI), 66 to 86 (IPNS…VIVV), 103 to 123 (VFVG…AYAM), 131 to 151 (FMDG…VGFV), and 178 to 198 (NGLF…IWGL).

The protein belongs to the NqrDE/RnfAE family. Composed of six subunits; NqrA, NqrB, NqrC, NqrD, NqrE and NqrF.

The protein localises to the cell inner membrane. The catalysed reaction is a ubiquinone + n Na(+)(in) + NADH + H(+) = a ubiquinol + n Na(+)(out) + NAD(+). NQR complex catalyzes the reduction of ubiquinone-1 to ubiquinol by two successive reactions, coupled with the transport of Na(+) ions from the cytoplasm to the periplasm. NqrA to NqrE are probably involved in the second step, the conversion of ubisemiquinone to ubiquinol. In Yersinia pseudotuberculosis serotype O:1b (strain IP 31758), this protein is Na(+)-translocating NADH-quinone reductase subunit D.